We begin with the raw amino-acid sequence, 333 residues long: Meiotic drive suppressor wtf9 (333 aa).

Positions 1–69 are disordered; that stretch reads MKNNYTSLKS…ENHSSGTTDN (69 aa). Over residues 19-30 the composition is skewed to basic and acidic residues; sequence KTDHEIDLEKGP. Helical transmembrane passes span 73–95, 108–130, 174–191, and 204–226; these read LLIK…VCYL, VEWT…LTYF, WVVI…TLFL, and LICS…RLPF.

The protein belongs to the WTF family. As to quaternary structure, homomer. Interacts with other proteins that exhibit high sequence similarity.

Its subcellular location is the spore membrane. It localises to the vacuole membrane. Its function is as follows. Acts as a suppressor component of the dual wtf meiotic drive system, and can suppress but not confer meiotic drive by compatible poisons. Wtf meiotic drive systems promote unequal transmission of alleles from the parental zygote to progeny spores by encoding a poison and an antidote from the same locus; the poison is trans-acting and forms toxic aggregates in all spores within an ascus, wherease the antidote is spore-specific and targets aggregates for degradation by the vacuole. Meiotic drive by wtf systems therefore lead to poisoning of all progeny that do not inherit the dual poison/antidote allele, or express a compatible antidote. The protein is Meiotic drive suppressor wtf9 of Schizosaccharomyces pombe (strain 972 / ATCC 24843) (Fission yeast).